Consider the following 140-residue polypeptide: Nucleoside triphosphatase NudI (140 aa).

Residues 1 to 140 (MRHRTIVCPL…RVTLSLKGLL (140 aa)) form the Nudix hydrolase domain. The short motif at 38–58 (GVEPGERIEEALRREIREELG) is the Nudix box element.

It belongs to the Nudix hydrolase family. NudI subfamily. In terms of assembly, monomer. The cofactor is Mg(2+).

It carries out the reaction a ribonucleoside 5'-triphosphate + H2O = a ribonucleoside 5'-phosphate + diphosphate + H(+). It catalyses the reaction a 2'-deoxyribonucleoside 5'-triphosphate + H2O = a 2'-deoxyribonucleoside 5'-phosphate + diphosphate + H(+). The catalysed reaction is dUTP + H2O = dUMP + diphosphate + H(+). The enzyme catalyses dTTP + H2O = dTMP + diphosphate + H(+). It carries out the reaction dCTP + H2O = dCMP + diphosphate + H(+). In terms of biological role, catalyzes the hydrolysis of nucleoside triphosphates, with a preference for pyrimidine deoxynucleoside triphosphates (dUTP, dTTP and dCTP). The chain is Nucleoside triphosphatase NudI from Klebsiella pneumoniae subsp. pneumoniae (strain ATCC 700721 / MGH 78578).